The sequence spans 243 residues: MNIENYLNETLKEHKLHFTLIDPDEQTPQEAVEIAKQAKKARSDAILVGGSITDQEDLNITVKSIKEEVDLPVILFPGNISGVSKYADALLFMSLLNSTNPYWITGAQALSAPSIKKMGIETIPMGYLIIEPGGTVGWVGDSKPIPRKKSDLAVAYALAAEFLGMRVIYLEAGSGADSHIPVDFIMKVKKLTNLMVIVGGGIKTAQDALEVKEAGADIIITGTVVEETDDTYKKIKELTDVIH.

Positions 22 and 51 each coordinate Mg(2+). Sn-glycerol 1-phosphate is bound by residues 169–175 (YLEAGSG), 200–201 (GG), and 222–223 (GT).

Belongs to the GGGP/HepGP synthase family. Group II subfamily. The cofactor is Mg(2+).

It localises to the cytoplasm. It carries out the reaction sn-glycerol 1-phosphate + (2E,6E,10E)-geranylgeranyl diphosphate = sn-3-O-(geranylgeranyl)glycerol 1-phosphate + diphosphate. The protein operates within membrane lipid metabolism; glycerophospholipid metabolism. Functionally, prenyltransferase that catalyzes the transfer of the geranylgeranyl moiety of geranylgeranyl diphosphate (GGPP) to the C3 hydroxyl of sn-glycerol-1-phosphate (G1P). This reaction is the first ether-bond-formation step in the biosynthesis of archaeal membrane lipids. In Methanosphaera stadtmanae (strain ATCC 43021 / DSM 3091 / JCM 11832 / MCB-3), this protein is Geranylgeranylglyceryl phosphate synthase.